The chain runs to 424 residues: Serpin E3 (424 aa).

The N-terminal stretch at 1–20 (MPPFLITLFLFHSCCLRANG) is a signal peptide. N-linked (GlcNAc...) asparagine glycosylation occurs at Asn-46. The segment at 143 to 174 (DLSEPNSTAIQTSEGASRETAGGGPSEGPGGW) is disordered. Polar residues predominate over residues 146–157 (EPNSTAIQTSEG). A compositionally biased stretch (gly residues) spans 163 to 173 (AGGGPSEGPGG).

This sequence belongs to the serpin family.

It localises to the secreted. Probable serine protease inhibitor. This is Serpin E3 (SERPINE3) from Homo sapiens (Human).